The sequence spans 369 residues: Somatostatin receptor type 2 (369 aa).

The Extracellular portion of the chain corresponds to 1–43; the sequence is MDMAYELLNGSQPWLSSPFDLNGSVATANSSNQTEPYYDLTSN. N-linked (GlcNAc...) asparagine glycosylation is found at Asn-9, Asn-22, Asn-29, and Asn-32. The chain crosses the membrane as a helical span at residues 44–67; the sequence is AVLTFIYFVVCIIGLCGNTLVIYV. Over 68-78 the chain is Cytoplasmic; sequence ILRYAKMKTIT. Residues 79-103 traverse the membrane as a helical segment; it reads NIYILNLAIADELFMLGLPFLAMQV. At 104–118 the chain is on the extracellular side; the sequence is ALVHWPFGKAICRVV. Cysteines 115 and 193 form a disulfide. A helical membrane pass occupies residues 119–138; the sequence is MTVDGINQFTSIFCLTVMSI. The Cytoplasmic portion of the chain corresponds to 139–161; sequence DRYLAVVHPIKSAKWRRPRTAKM. The helical transmembrane segment at 162-181 threads the bilayer; that stretch reads INVAVWGVSLLVILPIMIYA. The Extracellular segment spans residues 182-207; that stretch reads GLRSNQWGRSSCTINWPGESGAWYTG. Residues 208–229 form a helical membrane-spanning segment; sequence FIIYAFILGFLVPLTIICLCYL. Over 230–253 the chain is Cytoplasmic; the sequence is FIIIKVKSSGIRVGSSKRKKSEKK. The helical transmembrane segment at 254–278 threads the bilayer; that stretch reads VTRMVSIVVAVFIFCWLPFYIFNVS. The Extracellular portion of the chain corresponds to 279 to 288; the sequence is SVSVAISPTP. Residues 289–303 traverse the membrane as a helical segment; that stretch reads ALKGMFDFVVVLTYA. Over 304-369 the chain is Cytoplasmic; the sequence is NSCANPILYA…LLNGDLQTSI (66 aa). The S-palmitoyl cysteine moiety is linked to residue Cys-328. 3 positions are modified to phosphoserine: Ser-341, Ser-343, and Ser-348. Phosphothreonine occurs at positions 353 and 354.

This sequence belongs to the G-protein coupled receptor 1 family. As to quaternary structure, homodimer and heterodimer with SSTR3 and SSTR5. Heterodimerization with SSTR3 inactivates SSTR3 receptor function. Heterodimerization with SSTR5 is enhanced by agonist stimulation of SSTR2 and increases SSTR2 cell growth inhibition activity. Following agonist stimulation, homodimers dissociate into monomers which is required for receptor internalization. Interacts with beta-arrestin; this interaction is necessary for receptor internalization and is destabilized by heterodimerization with SSTR5 which results in increased recycling of SSTR2 to the cell surface. Interacts (via C-terminus) with SHANK1 (via PDZ domain). Post-translationally, phosphorylated on serine and threonine residues in response to agonist stimulation, leading to receptor desensitization and rapid internalization. Phosphorylated to a greater extent on serine than threonine residues. Threonine phosphorylation is required for arrestin binding and receptor endocytosis but is not necessary for desensitization.

The protein localises to the cell membrane. Its subcellular location is the cytoplasm. Its function is as follows. Receptor for somatostatin-14 and -28. This receptor is coupled via pertussis toxin sensitive G proteins to inhibition of adenylyl cyclase. In addition it stimulates phosphotyrosine phosphatase and PLC via pertussis toxin insensitive as well as sensitive G proteins. Inhibits calcium entry by suppressing voltage-dependent calcium channels. Acts as the functionally dominant somatostatin receptor in pancreatic alpha- and beta-cells where it mediates the inhibitory effect of somatostatin-14 on hormone secretion. Inhibits cell growth through enhancement of MAPK1 and MAPK2 phosphorylation and subsequent up-regulation of CDKN1B. Stimulates neuronal migration and axon outgrowth and may participate in neuron development and maturation during brain development. Mediates negative regulation of insulin receptor signaling through PTPN6. Inactivates SSTR3 receptor function following heterodimerization. In Sus scrofa (Pig), this protein is Somatostatin receptor type 2 (SSTR2).